The sequence spans 30 residues: Cycloviolacin-O7 (30 aa).

The cyclopeptide (Ser-Asn) cross-link spans 1–30 (SIPCGESCVWIPCTITALAGCKCKSKVCYN). Cystine bridges form between Cys-4/Cys-21, Cys-8/Cys-23, and Cys-13/Cys-28.

In terms of processing, this is a cyclic peptide.

Probably participates in a plant defense mechanism. This is Cycloviolacin-O7 from Viola odorata (Sweet violet).